The primary structure comprises 610 residues: MCGIVGAVAQRDITPILIEGLKRLEYRGYDSCGVALYMDGHLRRTRSTKRVAELSEQVAEDKLGGFTGIAHTRWATHGIPATYNAHPHFSAQGKDEPRIALVHNGIIENHEELRQELQGVGYVFESQTDTEVIAHLVNHLYAGDLFEAVQQAVRRLQGAYAIAVFCRDEPHRVVGARQGSPLVVGLGQNENFLASDALALAGTTDQIIYLEDGDVVDLQLARVWIVDQAGKQVERKAHTVQVHTGAAELGPYRHFMQKEIFEQPRAVGDTLQDIESITPELFGDGAYKVFKEIDSLLILACGTSYYAGLTAKYWIESIARIPVAVEIASEYRYRDSVPNPNALVVTISQSGETADTLAALKHARSLGMQHTLTVCNVATSAMVRECELAYITRAGVEIGVASTKAFTTQLTALFLLTLALAQTRGRLTEEQEAEHLKALRHLPAAIGAVLALEPQIMAWADRFASKENALFLGRGMHYPIALEGALKLKEISYIHAEAYPAGELKHGPLALVTEHMPVVTIAPKDALLEKLKSNMQEVRARGGELYVFADADSKIANAEGMHVIRMPEYYGALSPIVHTIPLQLLSYHTACVRGTDVDKPRNLAKSVTVE.

The Nucleophile; for GATase activity role is filled by cysteine 2. The Glutamine amidotransferase type-2 domain maps to 2 to 221 (CGIVGAVAQR…DGDVVDLQLA (220 aa)). SIS domains are found at residues 286-426 (AYKV…TRGR) and 459-600 (WADR…VDKP). Lysine 605 serves as the catalytic For Fru-6P isomerization activity.

In terms of assembly, homodimer.

The protein resides in the cytoplasm. The catalysed reaction is D-fructose 6-phosphate + L-glutamine = D-glucosamine 6-phosphate + L-glutamate. In terms of biological role, catalyzes the first step in hexosamine metabolism, converting fructose-6P into glucosamine-6P using glutamine as a nitrogen source. The chain is Glutamine--fructose-6-phosphate aminotransferase [isomerizing] from Bordetella bronchiseptica (strain ATCC BAA-588 / NCTC 13252 / RB50) (Alcaligenes bronchisepticus).